The primary structure comprises 274 residues: tRNA-cytidine(32) 2-sulfurtransferase (274 aa).

The PP-loop motif motif lies at 40-45; that stretch reads SGGKDS. Residues Cys115, Cys118, and Cys206 each coordinate [4Fe-4S] cluster.

The protein belongs to the TtcA family. In terms of assembly, homodimer. Mg(2+) serves as cofactor. Requires [4Fe-4S] cluster as cofactor.

It is found in the cytoplasm. It catalyses the reaction cytidine(32) in tRNA + S-sulfanyl-L-cysteinyl-[cysteine desulfurase] + AH2 + ATP = 2-thiocytidine(32) in tRNA + L-cysteinyl-[cysteine desulfurase] + A + AMP + diphosphate + H(+). Its pathway is tRNA modification. Functionally, catalyzes the ATP-dependent 2-thiolation of cytidine in position 32 of tRNA, to form 2-thiocytidine (s(2)C32). The sulfur atoms are provided by the cysteine/cysteine desulfurase (IscS) system. The chain is tRNA-cytidine(32) 2-sulfurtransferase from Pseudomonas paraeruginosa (strain DSM 24068 / PA7) (Pseudomonas aeruginosa (strain PA7)).